We begin with the raw amino-acid sequence, 114 residues long: UPF0757 protein YmgG (114 aa).

This sequence belongs to the UPF0757 family.

This is UPF0757 protein YmgG from Edwardsiella ictaluri (strain 93-146).